Reading from the N-terminus, the 126-residue chain is S-adenosylmethionine decarboxylase proenzyme (126 aa).

Catalysis depends on S63, which acts as the Schiff-base intermediate with substrate; via pyruvic acid. Residue S63 is modified to Pyruvic acid (Ser); by autocatalysis. H68 functions as the Proton acceptor; for processing activity in the catalytic mechanism. The active-site Proton donor; for catalytic activity is the C83.

This sequence belongs to the prokaryotic AdoMetDC family. Type 1 subfamily. As to quaternary structure, heterotetramer of two alpha and two beta chains arranged as a dimer of alpha/beta heterodimers. The cofactor is pyruvate. Post-translationally, is synthesized initially as an inactive proenzyme. Formation of the active enzyme involves a self-maturation process in which the active site pyruvoyl group is generated from an internal serine residue via an autocatalytic post-translational modification. Two non-identical subunits are generated from the proenzyme in this reaction, and the pyruvate is formed at the N-terminus of the alpha chain, which is derived from the carboxyl end of the proenzyme. The post-translation cleavage follows an unusual pathway, termed non-hydrolytic serinolysis, in which the side chain hydroxyl group of the serine supplies its oxygen atom to form the C-terminus of the beta chain, while the remainder of the serine residue undergoes an oxidative deamination to produce ammonia and the pyruvoyl group blocking the N-terminus of the alpha chain.

It catalyses the reaction S-adenosyl-L-methionine + H(+) = S-adenosyl 3-(methylsulfanyl)propylamine + CO2. The protein operates within amine and polyamine biosynthesis; S-adenosylmethioninamine biosynthesis; S-adenosylmethioninamine from S-adenosyl-L-methionine: step 1/1. In terms of biological role, catalyzes the decarboxylation of S-adenosylmethionine to S-adenosylmethioninamine (dcAdoMet), the propylamine donor required for the synthesis of the polyamines spermine and spermidine from the diamine putrescine. This Bacillus velezensis (strain DSM 23117 / BGSC 10A6 / LMG 26770 / FZB42) (Bacillus amyloliquefaciens subsp. plantarum) protein is S-adenosylmethionine decarboxylase proenzyme.